We begin with the raw amino-acid sequence, 496 residues long: Signal recognition particle subunit SRP54 1 (496 aa).

A G-domain region spans residues 1–296; sequence MVLAQLGGSI…DVKPFVSRLL (296 aa). GTP is bound by residues 108–115, 191–195, and 249–252; these read GLQGSGKT, DTSGR, and TKMD. The tract at residues 297–496 is M-domain; that stretch reads GMGDLSGLVN…MGMFGGGGGE (200 aa).

The protein belongs to the GTP-binding SRP family. SRP54 subfamily. As to quaternary structure, component of a signal recognition particle (SRP) complex that consists of a 7SL RNA molecule of 300 nucleotides and six protein subunits: SRP72, SRP68, SRP54, SRP19, SRP14 and SRP9.

It is found in the cytoplasm. The protein resides in the endoplasmic reticulum. The catalysed reaction is GTP + H2O = GDP + phosphate + H(+). In terms of biological role, component of the signal recognition particle (SRP) complex, a ribonucleoprotein complex that mediates the cotranslational targeting of secretory and membrane proteins to the endoplasmic reticulum (ER). As part of the SRP complex, associates with the SRP receptor (SR) component SRPRA to target secretory proteins to the endoplasmic reticulum membrane. Binds to the signal sequence of presecretory proteins when they emerge from the ribosomes. Displays basal GTPase activity, and stimulates reciprocal GTPase activation of the SR subunit SRPRA. Forms a guanosine 5'-triphosphate (GTP)-dependent complex with the SR subunit SRPRA. SR compaction and GTPase mediated rearrangement of SR drive SRP-mediated cotranslational protein translocation into the ER. Requires the presence of SRP9/SRP14 and/or SRP19 to stably interact with RNA. The sequence is that of Signal recognition particle subunit SRP54 1 from Solanum lycopersicum (Tomato).